A 686-amino-acid chain; its full sequence is ATP-dependent DNA helicase RecG (686 aa).

The tract at residues 50–149 (TVIDLNQAED…GTQTQENADV (100 aa)) is wedge domain. The Helicase ATP-binding domain maps to 279 to 439 (DLKAPIRMHR…VFGEMDVSSI (161 aa)). 292-299 (GDVGSGKT) contributes to the ATP binding site. The short motif at 392–395 (DEQH) is the DEAH box element. In terms of domain architecture, Helicase C-terminal spans 462–618 (VLMQMTSELK…GFELSERDLE (157 aa)).

The protein belongs to the helicase family. RecG subfamily. In terms of assembly, monomer.

It catalyses the reaction Couples ATP hydrolysis with the unwinding of duplex DNA by translocating in the 3'-5' direction.. It carries out the reaction ATP + H2O = ADP + phosphate + H(+). In terms of biological role, plays a critical role in recombination and DNA repair. Helps process Holliday junction intermediates to mature products by catalyzing branch migration. Has replication fork regression activity, unwinds stalled or blocked replication forks to make a HJ that can be resolved. Has a DNA unwinding activity characteristic of a DNA helicase with 3'-5' polarity. In Staphylococcus aureus (strain NCTC 8325 / PS 47), this protein is ATP-dependent DNA helicase RecG.